We begin with the raw amino-acid sequence, 308 residues long: Glutaminase (308 aa).

Residues S66, N117, E161, N168, Y192, Y244, and V262 each coordinate substrate.

This sequence belongs to the glutaminase family. Homotetramer.

It catalyses the reaction L-glutamine + H2O = L-glutamate + NH4(+). The protein is Glutaminase of Klebsiella pneumoniae subsp. pneumoniae (strain ATCC 700721 / MGH 78578).